The primary structure comprises 203 residues: MATSSLTPGVSLDENGSIKLFNKFPFEGVEVKDISLVDYITIGNGQPLPHTAGRFQTKRFRKARCFIVERLTNSLMMNGRNNGKKLLATRIVKHAFEIIALLTDQNPLQVLVDAVAACGPREDSTRIGSAGTVRRQAVDVSPLRRVNQALALITIGAREAAFRNVKSISECLAEEIINAAKGSSNSYAIKKKDELERVAKSNR.

Belongs to the universal ribosomal protein uS7 family. In terms of assembly, component of the small ribosomal subunit (SSU). Mature yeast ribosomes consist of a small (40S) and a large (60S) subunit. The 40S small subunit contains 1 molecule of ribosomal RNA (18S rRNA) and at least 33 different proteins. The large 60S subunit contains 3 rRNA molecules (25S, 5.8S and 5S rRNA) and at least 46 different proteins.

It localises to the cytoplasm. Its subcellular location is the nucleus. It is found in the nucleolus. Functionally, component of the ribosome, a large ribonucleoprotein complex responsible for the synthesis of proteins in the cell. The small ribosomal subunit (SSU) binds messenger RNAs (mRNAs) and translates the encoded message by selecting cognate aminoacyl-transfer RNA (tRNA) molecules. The large subunit (LSU) contains the ribosomal catalytic site termed the peptidyl transferase center (PTC), which catalyzes the formation of peptide bonds, thereby polymerizing the amino acids delivered by tRNAs into a polypeptide chain. The nascent polypeptides leave the ribosome through a tunnel in the LSU and interact with protein factors that function in enzymatic processing, targeting, and the membrane insertion of nascent chains at the exit of the ribosomal tunnel. This Schizosaccharomyces pombe (strain 972 / ATCC 24843) (Fission yeast) protein is Small ribosomal subunit protein uS7A (rps5).